A 187-amino-acid chain; its full sequence is Peptidyl-tRNA hydrolase (187 aa).

Phe14 provides a ligand contact to tRNA. The active-site Proton acceptor is the His19. Tyr64, Asn66, and Asn112 together coordinate tRNA.

Belongs to the PTH family. In terms of assembly, monomer.

It is found in the cytoplasm. It catalyses the reaction an N-acyl-L-alpha-aminoacyl-tRNA + H2O = an N-acyl-L-amino acid + a tRNA + H(+). In terms of biological role, hydrolyzes ribosome-free peptidyl-tRNAs (with 1 or more amino acids incorporated), which drop off the ribosome during protein synthesis, or as a result of ribosome stalling. Its function is as follows. Catalyzes the release of premature peptidyl moieties from peptidyl-tRNA molecules trapped in stalled 50S ribosomal subunits, and thus maintains levels of free tRNAs and 50S ribosomes. This Oceanobacillus iheyensis (strain DSM 14371 / CIP 107618 / JCM 11309 / KCTC 3954 / HTE831) protein is Peptidyl-tRNA hydrolase.